The following is a 276-amino-acid chain: Putative pyruvate, phosphate dikinase regulatory protein 2 (276 aa).

146–153 contacts ADP; the sequence is GVSRTSKT.

Belongs to the pyruvate, phosphate/water dikinase regulatory protein family. PDRP subfamily.

It catalyses the reaction N(tele)-phospho-L-histidyl/L-threonyl-[pyruvate, phosphate dikinase] + ADP = N(tele)-phospho-L-histidyl/O-phospho-L-threonyl-[pyruvate, phosphate dikinase] + AMP + H(+). It carries out the reaction N(tele)-phospho-L-histidyl/O-phospho-L-threonyl-[pyruvate, phosphate dikinase] + phosphate + H(+) = N(tele)-phospho-L-histidyl/L-threonyl-[pyruvate, phosphate dikinase] + diphosphate. Bifunctional serine/threonine kinase and phosphorylase involved in the regulation of the pyruvate, phosphate dikinase (PPDK) by catalyzing its phosphorylation/dephosphorylation. This is Putative pyruvate, phosphate dikinase regulatory protein 2 from Enterococcus faecalis (strain ATCC 700802 / V583).